We begin with the raw amino-acid sequence, 58 residues long: Metallothionein (58 aa).

Residues 1-29 (PDPCCAEGTCECEEGKCKAGCKCTSCRCS) are beta. A divalent metal cation is bound by residues Cys4, Cys5, Cys10, Cys12, Cys17, Cys21, Cys23, Cys26, Cys28, Cys31, Cys34, Cys38, Cys40, Cys46, Cys50, Cys54, Cys56, and Cys57. The segment at 30 to 58 (PCEKCTSECECKSKEECAKNCTKPCSCCP) is alpha.

In terms of biological role, metallothioneins have a high content of cysteine residues that bind various heavy metals. Class I MTS in crustacea are involved in the sequestration of elevated levels of heavy-metal ions. The sequence is that of Metallothionein from Potamon potamios.